Consider the following 1024-residue polypeptide: MKFFALFIQRPVATTLLTLAITLSGIIGFSLLPVSPLPQVDYPVIMVSASMPGADPETMASSVATPLERALGRIAGVNEMTSTSSLGSTRIILQFDLNRDINGAARDVQAALNAAQSLLPSGMPSRPTYRKMNPSDAPIMIMTLTSDTFSQGQLYDYASTKLAQKIAQTEGVSDVTVGGSSLPAVRVELNPSALFNQGVSLDAVRQAISAANVRRPQGSVDAAETHWQVQANDEIKTAEGYRPLIVHYNNGSPVRLQDVANVIDSVQDVRNAGMSAGQPAVLLVISREPGANIIATVDRIRAELPALRASIPASIQLNIAQDRSPTIRASLDEVERSLVIAVALVILVVFIFLRSGRATLIPAVAVPVSLIGTFAAMYLCGFSLNNLSLMALTIATGFVVDDAIVVLENISRHLEAGVKPKVAALRGVREVGFTVLSMSISLVAVFIPLLLMAGLPGRLFREFAVTLSVAIGISLVISLTLTPMMCAWLLRSHPKGQQQRIRGFGKVLLAIQQGYGRSLNWALSHTRWVMVVLLSTIALNVWLYISIPKTFFPEQDTGRMMGFIQADQSISFQSMQQKLKDFMQIVGADPAVDSVTGFTGGSRTNSGSMFISLKPLSERQETAQQVITRLRGKLAKEPGANLFLSSVQDIRVGGRHSNAAYQFTLLADDLAALREWEPKVRAALAKLPQLADVNSDQQDKGAEMALTYDRETMARLGIDVSEANALLNNAFGQRQISTIYQPLNQYKVVMEVAPEYTQDVSSLDKMFVINSNGQSIPLSYFAKWQPANAPLAVNHQGLSAASTISFNLPDGGSLSEATAAVERAMTELGVPSTVRGAFAGTAQVFQETLKSQLWLIMAAIATVYIVLGILYESYVHPLTILSTLPSAGVGALLALELFDAPFSLIALIGIMLLIGIVKKNAIMMVDFALDAQRNGNISAREAIFQASLLRFRPIIMTTLAALFGALPLVLSSGDGAELRQPLGITIVGGLVVSQLLTLYTTPVIYLYFDRLRNRFSKQPLMKLE.

A run of 12 helical transmembrane segments spans residues 12 to 32 (VATT…FSLL), 333 to 353 (EVER…FIFL), 360 to 380 (LIPA…MYLC), 387 to 407 (LSLM…IVVL), 435 to 455 (VLSM…MAGL), 469 to 489 (VAIG…CAWL), 528 to 548 (WVMV…ISIP), 853 to 873 (LWLI…LYES), 875 to 895 (VHPL…LLAL), 897 to 917 (LFDA…IGIV), 953 to 973 (PIIM…LSSG), and 984 to 1004 (ITIV…TPVI).

Belongs to the resistance-nodulation-cell division (RND) (TC 2.A.6) family. MdtC subfamily. As to quaternary structure, part of a tripartite efflux system composed of MdtA, MdtB and MdtC. MdtC forms a heteromultimer with MdtB.

Its subcellular location is the cell inner membrane. In Yersinia pestis bv. Antiqua (strain Antiqua), this protein is Multidrug resistance protein MdtC.